The primary structure comprises 432 residues: Putative D-alanyl-D-alanine carboxypeptidase (432 aa).

A helical; Signal-anchor transmembrane segment spans residues 7-25 (ATVLLTFSLSAFAVEYPVL).

This sequence belongs to the peptidase S12 family. YfeW subfamily.

Its subcellular location is the cell inner membrane. The enzyme catalyses Preferential cleavage: (Ac)2-L-Lys-D-Ala-|-D-Ala. Also transpeptidation of peptidyl-alanyl moieties that are N-acyl substituents of D-alanine.. The chain is Putative D-alanyl-D-alanine carboxypeptidase from Salmonella gallinarum (strain 287/91 / NCTC 13346).